The following is a 1244-amino-acid chain: Protein MMS22-like (1244 aa).

The protein belongs to the MMS22 family. MMS22L subfamily. As to quaternary structure, component of the MMS22L-TONSL complex, a complex at least composed of MMS22L and TONSL/NFKBIL2. Interacts with RAD51; interaction is direct. Post-translationally, degraded by the ubiquitin-proteasome system upon replication stress.

The protein resides in the nucleus. It is found in the chromosome. In terms of biological role, component of the MMS22L-TONSL complex, a complex that promotes homologous recombination-mediated repair of double-strand breaks (DSBs) at stalled or collapsed replication forks. The MMS22L-TONSL complex is required to maintain genome integrity during DNA replication. It mediates the assembly of RAD51 filaments on single-stranded DNA (ssDNA): the MMS22L-TONSL complex is recruited to DSBs following histone replacement by histone chaperones and eviction of the replication protein A complex (RPA/RP-A) from DSBs. Following recruitment to DSBs, the TONSL-MMS22L complex promotes recruitment of RAD51 filaments and subsequent homologous recombination. Within the complex, MMS22L acts by binding ssDNA. This chain is Protein MMS22-like (MMS22L), found in Bos taurus (Bovine).